A 69-amino-acid chain; its full sequence is MMSKLRVLLIICLLLFPLTAVPLDGDQPADRPAERTQDDISSEHHPMFDAVRGCCPALACAMGCRPCCG.

The first 20 residues, 1–20 (MMSKLRVLLIICLLLFPLTA), serve as a signal peptide directing secretion. Positions 21–52 (VPLDGDQPADRPAERTQDDISSEHHPMFDAVR) are excised as a propeptide. Residues 22-43 (PLDGDQPADRPAERTQDDISSE) are disordered. Basic and acidic residues predominate over residues 28-43 (PADRPAERTQDDISSE). Proline 66 carries the post-translational modification 4-hydroxyproline; partial; in minor form. Cysteine 68 is subject to Cysteine amide.

The protein belongs to the conotoxin M family. Mostly non-hydroxylated. Post-translationally, contains 3 disulfide bonds. In terms of tissue distribution, expressed by the venom duct.

The protein localises to the secreted. Functionally, mu-conotoxins block voltage-gated sodium channels (Nav). In Conus amadis (Amadis cone), this protein is Mu-conotoxin-like Am3.1.